An 86-amino-acid polypeptide reads, in one-letter code: Small ribosomal subunit protein uS17 (86 aa).

This sequence belongs to the universal ribosomal protein uS17 family. As to quaternary structure, part of the 30S ribosomal subunit.

In terms of biological role, one of the primary rRNA binding proteins, it binds specifically to the 5'-end of 16S ribosomal RNA. The protein is Small ribosomal subunit protein uS17 of Streptococcus thermophilus (strain CNRZ 1066).